Here is a 729-residue protein sequence, read N- to C-terminus: Beta-galactosidase 4 (729 aa).

The first 35 residues, 1–35 (MAPAPTPAAAAGRRVAVLAAALVAASLAASVGVAN), serve as a signal peptide directing secretion. Glu194 functions as the Proton donor in the catalytic mechanism. Glu263 functions as the Nucleophile in the catalytic mechanism.

This sequence belongs to the glycosyl hydrolase 35 family.

It is found in the secreted. The protein resides in the extracellular space. It localises to the apoplast. The catalysed reaction is Hydrolysis of terminal non-reducing beta-D-galactose residues in beta-D-galactosides.. This is Beta-galactosidase 4 from Oryza sativa subsp. japonica (Rice).